The primary structure comprises 586 residues: Envelope glycoprotein (586 aa).

Residues 1–22 (MNFNYHFIWSLVILSQISQVQA) form the signal peptide. At 23-526 (GFGDPREALA…TSFHGFLPYV (504 aa)) the chain is on the extracellular side. N-linked (GlcNAc...) asparagine; by host glycans are attached at residues Asn-120 and Asn-237. A CXXC motif is present at residues 247–250 (CWLC). Intrachain disulfides connect Cys-247–Cys-250, Cys-247–Cys-483, and Cys-475–Cys-482. N-linked (GlcNAc...) asparagine; by host glycans are attached at residues Asn-264, Asn-276, Asn-291, Asn-304, Asn-318, Asn-324, Asn-339, and Asn-357. The interval 398–418 (LIPLFVGLGITTAVSTGAAGL) is fusion peptide. Coiled-coil stretches lie at residues 419 to 469 (GVSI…LLTA) and 479 to 515 (QEKCCFYANKSGIVRDKIKNLQDDLERRRRQLIDNPF). Positions 458–474 (LQNRRGLDLLTAEQGGI) are immunosuppression. A CX6CC motif is present at residues 475–483 (CLALQEKCC). Asn-487 carries an N-linked (GlcNAc...) asparagine; by host glycan. Residues 527–547 (MPLLGPLLCLLLVLSFGPIIF) traverse the membrane as a helical segment. Over 548 to 586 (NKLMTFIKHQIESIQAKPIQVHYHRLEQEDSGGSYLTLT) the chain is Cytoplasmic. A YXXL motif; contains endocytosis signal motif is present at residues 570–573 (YHRL).

The mature envelope protein (Env) consists of a trimer of SU-TM heterodimers attached by a labile interchain disulfide bond. Specific enzymatic cleavages in vivo yield mature proteins. Envelope glycoproteins are synthesized as an inactive precursor that is N-glycosylated and processed likely by host cell furin or by a furin-like protease in the Golgi to yield the mature SU and TM proteins. The cleavage site between SU and TM requires the minimal sequence [KR]-X-[KR]-R. The R-peptide is released from the C-terminus of the cytoplasmic tail of the TM protein upon particle formation as a result of proteolytic cleavage by the viral protease. Cleavage of this peptide is required for TM to become fusogenic. In terms of processing, the CXXC motif is highly conserved across a broad range of retroviral envelope proteins. It is thought to participate in the formation of a labile disulfide bond possibly with the CX6CC motif present in the transmembrane protein. Isomerization of the intersubunit disulfide bond to an SU intrachain disulfide bond is thought to occur upon receptor recognition in order to allow membrane fusion.

The protein resides in the virion membrane. The protein localises to the host cell membrane. In terms of biological role, the surface protein (SU) attaches the virus to the host cell by binding to its receptor. This interaction triggers the refolding of the transmembrane protein (TM) and is thought to activate its fusogenic potential by unmasking its fusion peptide. Fusion occurs at the host cell plasma membrane. The transmembrane protein (TM) acts as a class I viral fusion protein. Under the current model, the protein has at least 3 conformational states: pre-fusion native state, pre-hairpin intermediate state, and post-fusion hairpin state. During viral and target cell membrane fusion, the coiled coil regions (heptad repeats) assume a trimer-of-hairpins structure, positioning the fusion peptide in close proximity to the C-terminal region of the ectodomain. The formation of this structure appears to drive apposition and subsequent fusion of viral and target cell membranes. Membranes fusion leads to delivery of the nucleocapsid into the cytoplasm. This is Envelope glycoprotein (env) from Mason-Pfizer monkey virus (MPMV).